A 336-amino-acid chain; its full sequence is Adenosine deaminase (336 aa).

Positions 15 and 17 each coordinate Zn(2+). 3 residues coordinate substrate: His17, Asp19, and Gly172. His199 is a binding site for Zn(2+). Catalysis depends on Glu202, which acts as the Proton donor. Asp279 is a binding site for Zn(2+).

This sequence belongs to the metallo-dependent hydrolases superfamily. Adenosine and AMP deaminases family. Adenosine deaminase subfamily. The cofactor is Zn(2+).

It catalyses the reaction adenosine + H2O + H(+) = inosine + NH4(+). The enzyme catalyses 2'-deoxyadenosine + H2O + H(+) = 2'-deoxyinosine + NH4(+). Catalyzes the hydrolytic deamination of adenosine and 2-deoxyadenosine. The protein is Adenosine deaminase of Streptococcus thermophilus (strain ATCC BAA-491 / LMD-9).